A 219-amino-acid chain; its full sequence is Protein-L-isoaspartate O-methyltransferase 1 (219 aa).

Residue S67 is part of the active site.

It belongs to the methyltransferase superfamily. L-isoaspartyl/D-aspartyl protein methyltransferase family.

Its subcellular location is the cytoplasm. It catalyses the reaction [protein]-L-isoaspartate + S-adenosyl-L-methionine = [protein]-L-isoaspartate alpha-methyl ester + S-adenosyl-L-homocysteine. Its function is as follows. Catalyzes the methyl esterification of L-isoaspartyl residues in peptides and proteins that result from spontaneous decomposition of normal L-aspartyl and L-asparaginyl residues. It plays a role in the repair and/or degradation of damaged proteins. This Geotalea uraniireducens (strain Rf4) (Geobacter uraniireducens) protein is Protein-L-isoaspartate O-methyltransferase 1.